A 109-amino-acid chain; its full sequence is Small ribosomal subunit protein uS10 (109 aa).

It belongs to the universal ribosomal protein uS10 family. As to quaternary structure, part of the 30S ribosomal subunit.

Involved in the binding of tRNA to the ribosomes. The sequence is that of Small ribosomal subunit protein uS10 from Koribacter versatilis (strain Ellin345).